The sequence spans 88 residues: Small ribosomal subunit protein bS20 (88 aa).

The segment at 1-28 is disordered; sequence MANTVQARKRARQAVKQNEHNSSLRSKL.

This sequence belongs to the bacterial ribosomal protein bS20 family.

Functionally, binds directly to 16S ribosomal RNA. The sequence is that of Small ribosomal subunit protein bS20 from Polynucleobacter necessarius subsp. necessarius (strain STIR1).